Reading from the N-terminus, the 1015-residue chain is Putative calcium-transporting ATPase 7, plasma membrane-type (1015 aa).

Position 1 is an N-acetylmethionine (Met-1). Residues 1-161 (MESYLNSNFD…NKFAESELRS (161 aa)) lie on the Cytoplasmic side of the membrane. Residues 20–31 (VLEKWRNLCSVV) are interaction with calmodulin. Phosphoserine; by CPK is present on Ser-45. Residues 162–182 (FWVFVWEALQDMTLMILGVCA) traverse the membrane as a helical segment. Residues 183–200 (FVSLIVGIATEGWPQGSH) lie on the Lumenal side of the membrane. Residues 201-221 (DGLGIVASILLVVFVTATSDY) traverse the membrane as a helical segment. Over 222–349 (RQSLQFRDLD…DDETPLQVKL (128 aa)) the chain is Cytoplasmic. The helical transmembrane segment at 350-369 (NGVATIIGKIGLSFAIVTFA) threads the bilayer. The Lumenal segment spans residues 370–399 (VLVQGMFMRKLSLGPHWWWSGDDALELLEY). The chain crosses the membrane as a helical span at residues 400–417 (FAIAVTIVVVAVPEGLPL). Topologically, residues 418–811 (AVTLSLAFAM…KWGRSVYINI (394 aa)) are cytoplasmic. The active-site 4-aspartylphosphate intermediate is the Asp-455. Mg(2+) contacts are provided by Asp-756 and Asp-760. The helical transmembrane segment at 812-830 (QKFVQFQLTVNVVALIVNF) threads the bilayer. Topologically, residues 831–841 (SSACLTGSAPL) are lumenal. The helical transmembrane segment at 842–862 (TAVQLLWVNMIMDTLGALALA) threads the bilayer. At 863–882 (TEPPNNELMKRMPVGRRGNF) the chain is on the cytoplasmic side. Residues 883–905 (ITNAMWRNILGQAVYQFIIIWIL) traverse the membrane as a helical segment. The Lumenal segment spans residues 906-917 (QAKGKSMFGLVG). The chain crosses the membrane as a helical span at residues 918–939 (SDSTLVLNTLIFNCFVFCQVFN). The Cytoplasmic segment spans residues 940–957 (EVSSREMEEIDVFKGILD). The chain crosses the membrane as a helical span at residues 958 to 979 (NYVFVVVIGATVFFQIIIIEFL). Residues 980-989 (GTFASTTPLT) are Lumenal-facing. The helical transmembrane segment at 990–1011 (IVQWFFSIFVGFLGMPIAAGLK) threads the bilayer. Over 1012–1015 (KIPV) the chain is Cytoplasmic.

Belongs to the cation transport ATPase (P-type) (TC 3.A.3) family. Type IIB subfamily.

The protein resides in the membrane. The enzyme catalyses Ca(2+)(in) + ATP + H2O = Ca(2+)(out) + ADP + phosphate + H(+). With respect to regulation, activated by calmodulin. This magnesium-dependent enzyme catalyzes the hydrolysis of ATP coupled with the translocation of calcium from the cytosol out of the cell or into organelles. The polypeptide is Putative calcium-transporting ATPase 7, plasma membrane-type (ACA7) (Arabidopsis thaliana (Mouse-ear cress)).